The primary structure comprises 476 residues: Transcription factor HBP-1b(c1) (476 aa).

3 disordered regions span residues 1 to 29 (ESRRGGGGPAAAAAAAGDPRGPMPGFGAP), 133 to 159 (HNNDNWGESSMADTSPRTDTSTDPDID), and 171 to 207 (QLAAPTASDSSDKSRDKLDHKSLRRLAQNREAARKSR). Positions 10 to 25 (AAAAAAAGDPRGPMPG) are enriched in low complexity. Residues 135 to 144 (NDNWGESSMA) show a composition bias toward polar residues. A compositionally biased stretch (basic and acidic residues) spans 180-191 (SSDKSRDKLDHK). A bZIP domain is found at 189–252 (DHKSLRRLAQ…SSGDQSQSAS (64 aa)). Residues 191-211 (KSLRRLAQNREAARKSRLRKK) are basic motif. Residues 201–242 (EAARKSRLRKKAYIQNLESSRLKLTQLEQELQRARQQGIFIS) are a coiled coil. Residues 217-231 (LESSRLKLTQLEQEL) form a leucine-zipper region. The DOG1 domain occupies 256–473 (AVAFDMEYAR…RALSSLWLAR (218 aa)).

This sequence belongs to the bZIP family. Binds DNA as a dimer.

It is found in the nucleus. Functionally, transcriptional activator that binds specifically to the DNA sequence 5'-TGACG-3'. Recognizes ocs elements like the as-1 motif of the cauliflower mosaic virus 35S promoter. Binding to the as-1-like cis elements mediate auxin- and salicylic acid-inducible transcription. Binds to the hexamer motif 5'-ACGTCA-3' of histone gene promoters. The chain is Transcription factor HBP-1b(c1) from Triticum aestivum (Wheat).